A 129-amino-acid polypeptide reads, in one-letter code: Small ribosomal subunit protein uS11 (129 aa).

It belongs to the universal ribosomal protein uS11 family. In terms of assembly, part of the 30S ribosomal subunit. Interacts with proteins S7 and S18. Binds to IF-3.

Its function is as follows. Located on the platform of the 30S subunit, it bridges several disparate RNA helices of the 16S rRNA. Forms part of the Shine-Dalgarno cleft in the 70S ribosome. This is Small ribosomal subunit protein uS11 from Beijerinckia indica subsp. indica (strain ATCC 9039 / DSM 1715 / NCIMB 8712).